Here is a 111-residue protein sequence, read N- to C-terminus: MSEELLSQEEIEFLMETLEKKKVEKIPQGLQPFDFDSLEKISSERYPRLEQFLSTFTERLSEELKKITLSNLKVKVKEKDVKPLSKILPNLSPPVVFIRQHLEEVGDFTHC.

This is an uncharacterized protein from Aquifex aeolicus (strain VF5).